Consider the following 1266-residue polypeptide: SUMO-interacting motif-containing protein 1 (1266 aa).

A disordered region spans residues 1-35 (MEDFIVISDDSGSESSAGTRSGRARRLRRALSRTP). Residues 22-31 (GRARRLRRAL) show a composition bias toward basic residues. Positions 45–49 (FIDLT) match the SUMO interaction motif 1 (SIM); mediates the binding to polysumoylated substrates motif. The short motif at 64 to 68 (VIDLT) is the SUMO interaction motif 2 (SIM); mediates the binding to polysumoylated substrates element. Composition is skewed to low complexity over residues 183-197 (SPFSSTSNNSSSSSN) and 532-553 (SSGGVTQSSGGVIQSSSGVPQS). Disordered stretches follow at residues 183–206 (SPFSSTSNNSSSSSNQRTSLPCPQ), 532–732 (SSGG…SGDV), 756–812 (NRHS…PGSA), and 1024–1052 (LTPPQDETQTSPGPGVLKTSSDHLSPQPN). Over residues 560–571 (SPGSVSQSSGDV) the composition is skewed to polar residues. Positions 764–777 (SAPSSPSCSANPLS) are enriched in low complexity. Residues 779–1266 (QSEFSSEKRP…NPDTEPASER (488 aa)) are interaction with SLF2. A required for inhibition of CAPN3 protease activity region spans residues 857-1266 (SKGQKLEPIP…NPDTEPASER (410 aa)). The segment at 865-1200 (IPHRRLRMVT…IDRKDLIIKR (336 aa)) is NSE5-like domain.

In terms of assembly, forms a heterodimer with SLF2. Interacts (via SIM domains) with SUMO1 and SUMO2. Interacts with CAPN3 and CTBP1. Interacts with SMC6 and ZNF451.

The protein localises to the nucleus. The protein resides in the PML body. Its function is as follows. Inhibits the protease activity of CAPN3. May play a role in SMC5-SMC6 complex recruitment for viral restriction. Forms a complex with SLF2 and this complex is required to recruit SMC5-SMC6 complex to PML nuclear bodies and sites of viral replication. In Rattus norvegicus (Rat), this protein is SUMO-interacting motif-containing protein 1 (Simc1).